A 153-amino-acid chain; its full sequence is Glutamyl-tRNA(Gln) amidotransferase subunit C, mitochondrial (153 aa).

Residues 31-55 are disordered; the sequence is HPTKVPQQPEPNAFPDLDNNTDDDP.

Belongs to the GatC family. Subunit of the heterotrimeric GatCAB amidotransferase (AdT) complex, composed of A, B and C subunits.

The protein resides in the mitochondrion. The catalysed reaction is L-glutamyl-tRNA(Gln) + L-glutamine + ATP + H2O = L-glutaminyl-tRNA(Gln) + L-glutamate + ADP + phosphate + H(+). In terms of biological role, allows the formation of correctly charged Gln-tRNA(Gln) through the transamidation of misacylated Glu-tRNA(Gln) in the mitochondria. The reaction takes place in the presence of glutamine and ATP through an activated gamma-phospho-Glu-tRNA(Gln). This is Glutamyl-tRNA(Gln) amidotransferase subunit C, mitochondrial from Drosophila willistoni (Fruit fly).